Consider the following 654-residue polypeptide: ATP-dependent rRNA helicase spb-4 (654 aa).

The Q motif signature appears at 17 to 45 (WDALTPPLAQWILDYLSSMGFTQPTPVQK). The 202-residue stretch at 48–249 (LELFRGNKDV…TVGLLYPHKI (202 aa)) folds into the Helicase ATP-binding domain. 61–68 (AVTGSGKT) serves as a coordination point for ATP. The DEAD box signature appears at 197 to 200 (DEAD). Positions 286 to 444 (AIVQLLEKLE…VTPDEVERVS (159 aa)) constitute a Helicase C-terminal domain. Residues 531–631 (REKKRQEELA…EERAAALAAN (101 aa)) are a coiled coil. A compositionally biased stretch (basic and acidic residues) spans 542–577 (WKEEKAKRAQEENTGDKRKKNEAWSGKAEQEETKLQ). A disordered region spans residues 542 to 654 (WKEEKAKRAQ…SDEEFGGFDD (113 aa)). The segment covering 578 to 588 (RREKKRRKREA) has biased composition (basic residues). Over residues 589 to 625 (KKFSEMTEKEKEEHLKLEQMIEEVRKRNEAKAAEERA) the composition is skewed to basic and acidic residues. Positions 644-654 (DSDEEFGGFDD) are enriched in acidic residues.

It belongs to the DEAD box helicase family. DDX55/SPB4 subfamily. As to quaternary structure, component of pre-60S ribosomal complexes.

It is found in the nucleus. The protein localises to the nucleolus. It catalyses the reaction ATP + H2O = ADP + phosphate + H(+). ATP-binding RNA helicase involved in the biogenesis of 60S ribosomal subunits. Binds 90S pre-ribosomal particles and dissociates from pre-60S ribosomal particles after processing of 27SB pre-rRNA. Required for the normal formation of 18S rRNA through the processing of pre-rRNAs at sites A0, A1 and A2, and the normal formation of 25S and 5.8S rRNAs through the processing of pre-rRNAs at sites C1 and C2. The polypeptide is ATP-dependent rRNA helicase spb-4 (Neurospora crassa (strain ATCC 24698 / 74-OR23-1A / CBS 708.71 / DSM 1257 / FGSC 987)).